The chain runs to 31 residues: Cyclotide vpub-B (31 aa).

The segment at residues 1 to 31 is a cross-link (cyclopeptide (Gly-Asn)); it reads GIIPCGESCVFIPCITSVVGCSCKSKVCYKN. 3 disulfide bridges follow: cysteine 5/cysteine 21, cysteine 9/cysteine 23, and cysteine 14/cysteine 28.

It belongs to the cyclotide family. Bracelet subfamily. Post-translationally, this is a cyclic peptide.

Its function is as follows. Probably participates in a plant defense mechanism. The chain is Cyclotide vpub-B from Viola pubescens (Downy yellow violet).